Consider the following 269-residue polypeptide: Regulatory protein RecX (269 aa).

It belongs to the RecX family.

It localises to the cytoplasm. In terms of biological role, modulates RecA activity. In Geobacillus thermodenitrificans (strain NG80-2), this protein is Regulatory protein RecX.